The chain runs to 458 residues: MKSNFSKFKDFIKYKKVAVVGIGVSNRPLIKFLVKLGAKVTAFDKKHREKLGSISFELEEIGVDLVLGENYLDKLDGYDVIFKTPSMRIDRPEFVKAKESGAYITSEMEEFIKYCPAKVFGITGSDGKTTTTTLVYEMLKREGYRTWVGGNIGTPLFANIEEMKEDHMVVLELSSFQLMTMDVSPEISLITNLSPNHLDVHKDFEEYVWAKKNIFKYQSSNNLLVLNKDDDLTNGMENEALGDVLKFSLVEKVYNGACLSNNKLTIQGKEVCDSKDINLKGRHNIANLLAAFCMVNKYVSIDSMKYVATNFSGVEHRCEFIREVNGVKYYNDSIASSPSRTLAGLNSFEKPVILIAGGYDKKIPFEPLAEGGYDKIKILILMGDTKNKIRSAFEKVISYKKCEMEIVIVNSMEEAVKVADDMAEKGDIITLSPACASFDMYPNFEIRGNEFKNIVNSL.

124–130 (GSDGKTT) provides a ligand contact to ATP.

This sequence belongs to the MurCDEF family.

It is found in the cytoplasm. It carries out the reaction UDP-N-acetyl-alpha-D-muramoyl-L-alanine + D-glutamate + ATP = UDP-N-acetyl-alpha-D-muramoyl-L-alanyl-D-glutamate + ADP + phosphate + H(+). Its pathway is cell wall biogenesis; peptidoglycan biosynthesis. Functionally, cell wall formation. Catalyzes the addition of glutamate to the nucleotide precursor UDP-N-acetylmuramoyl-L-alanine (UMA). The protein is UDP-N-acetylmuramoylalanine--D-glutamate ligase of Clostridium botulinum (strain Okra / Type B1).